Here is a 653-residue protein sequence, read N- to C-terminus: Rab11 family-interacting protein 5 (653 aa).

A C2 domain is found at 5-146 (RGAEPAAGPS…AGRAQHTQWY (142 aa)). 6 positions are modified to phosphoserine: Ser176, Ser283, Ser286, Ser307, Ser357, and Ser367. Positions 269-300 (GPGAELLTRSPSRSSWLSTEGGRDSAQSPKLF) are disordered. Over residues 277-286 (RSPSRSSWLS) the composition is skewed to polar residues. Disordered stretches follow at residues 342–402 (HIYN…AVLG) and 415–548 (PGAS…RSSL). Low complexity predominate over residues 357–368 (SISGSLPSSGSL). Over residues 375–387 (FSEEGPRSTDDTW) the composition is skewed to basic and acidic residues. Phosphoserine is present on residues Ser391 and Ser395. Basic and acidic residues-rich tracts occupy residues 420–430 (PGEEEGARLPE) and 447–460 (VAEK…ERKP). Ser494, Ser538, Ser547, and Ser553 each carry phosphoserine. Residues 586 to 648 (KDSAVLDQSA…ETSPTLLQIP (63 aa)) enclose the FIP-RBD domain.

As to quaternary structure, interacts with RAB11FIP4. Interacts with NAPG. Interacts with RO60. Interacts with RAB11A that has been activated by GTP binding. In terms of assembly, (Microbial infection) Interacts with Kaposi's sarcoma-associated herpesvirus/HHV-8 protein ORF45; this interaction results in the lysosomal degradation of ORF45 and the inhibition of viral particle release. Phosphorylated on serine and threonine residues. Phosphorylation at Ser-357 is PKA-dependent. As to expression, detected at low levels in heart, brain, placenta, lung, liver, adipocytes, kidney, spleen, skeletal muscle and pancreas.

The protein resides in the cytoplasm. The protein localises to the recycling endosome membrane. It is found in the early endosome membrane. Its subcellular location is the golgi apparatus membrane. It localises to the cytoplasmic vesicle. The protein resides in the secretory vesicle membrane. The protein localises to the mitochondrion membrane. Functionally, rab effector involved in protein trafficking from apical recycling endosomes to the apical plasma membrane. Involved in insulin granule exocytosis. May regulate V-ATPase intracellular transport in response to extracellular acidosis. The polypeptide is Rab11 family-interacting protein 5 (Homo sapiens (Human)).